We begin with the raw amino-acid sequence, 812 residues long: Mitochondrial intermediate peptidase (812 aa).

Residues 1-29 (MRLSRQLLRSTPFLTRAKPVSGKVSHFRS) constitute a mitochondrion transit peptide. Positions 19–49 (PVSGKVSHFRSRTDLKGGSSNSSKSPDSVGD) are disordered. Residues 37-46 (SSNSSKSPDS) show a composition bias toward low complexity. His595 serves as a coordination point for Zn(2+). Glu596 is a catalytic residue. Residues His599 and His602 each contribute to the Zn(2+) site.

It belongs to the peptidase M3 family. The cofactor is Zn(2+).

It localises to the mitochondrion matrix. It carries out the reaction Release of an N-terminal octapeptide as second stage of processing of some proteins imported into the mitochondrion.. Cleaves proteins, imported into the mitochondrion, to their mature size. While most mitochondrial precursor proteins are processed to the mature form in one step by mitochondrial processing peptidase (MPP), the sequential cleavage by MIP of an octapeptide after initial processing by MPP is a required step for a subgroup of nuclear-encoded precursor proteins destined for the matrix or the inner membrane. The chain is Mitochondrial intermediate peptidase (OCT1) from Scheffersomyces stipitis (strain ATCC 58785 / CBS 6054 / NBRC 10063 / NRRL Y-11545) (Yeast).